The chain runs to 227 residues: MSTPTGQPAYVLHSRAYRENSALVDFLTPQGRLRAVLRSAKGKAGSLARPFVPLEVEFRGRGELKNVGRMESAGVATWMTGEALFSGMYLNELLIRLLPAEDPHPAVFEHYAATLLALALGRPLEPLLRSFEWRLLDDLGYGFAMDADINGEPLAIDGMYRLQVDAGLERVYLLQPGLFQGAELLAMSEADWSVPGALSAAKRLMRQALAVHLGGRPLVSRELFRKP.

Belongs to the RecO family.

Its function is as follows. Involved in DNA repair and RecF pathway recombination. In Pseudomonas syringae pv. syringae (strain B728a), this protein is DNA repair protein RecO.